A 385-amino-acid polypeptide reads, in one-letter code: Benzoylsuccinyl-CoA thiolase subunit BbsB (385 aa).

Arg19 contributes to the CoA binding site. Cys84 functions as the Acyl-thioester intermediate in the catalytic mechanism. Residues Gly121, Arg193, Cys204, and Cys205 each coordinate CoA.

The protein belongs to the thiolase-like superfamily. Thiolase family. As to quaternary structure, heterotetramer composed of two BbsA subunits and two BbsB subunits. BbsB forms homodimeric subcomplexes. Both BbsA and BbsB are essential for enzymatic activity.

It catalyses the reaction (S)-2-benzoylsuccinyl-CoA + CoA = benzoyl-CoA + succinyl-CoA. The protein operates within xenobiotic degradation; toluene degradation. Its function is as follows. Component of the BbsAB thiolase complex, which catalyzes the thiolytic cleavage of (S)-2-benzoylsuccinyl-CoA to succinyl-CoA and benzoyl-CoA, the final step of anaerobic toluene metabolism. This Thauera aromatica protein is Benzoylsuccinyl-CoA thiolase subunit BbsB.